Here is an 882-residue protein sequence, read N- to C-terminus: DNA mismatch repair protein MutS (882 aa).

627-634 serves as a coordination point for ATP; the sequence is GPNMAGKS.

Belongs to the DNA mismatch repair MutS family.

Functionally, this protein is involved in the repair of mismatches in DNA. It is possible that it carries out the mismatch recognition step. This protein has a weak ATPase activity. The chain is DNA mismatch repair protein MutS from Anaeromyxobacter dehalogenans (strain 2CP-C).